A 122-amino-acid chain; its full sequence is Histone H2B 1 (122 aa).

The interval 1 to 30 (MPPKPSAKGAKKAAKTVTKPKDGKKRRHAR) is disordered. O-linked (GlcNAc) serine glycosylation is present at Ser-109. Lys-117 participates in a covalent cross-link: Glycyl lysine isopeptide (Lys-Gly) (interchain with G-Cter in ubiquitin).

This sequence belongs to the histone H2B family. The nucleosome is a histone octamer containing two molecules each of H2A, H2B, H3 and H4 assembled in one H3-H4 heterotetramer and two H2A-H2B heterodimers. The octamer wraps approximately 147 bp of DNA. In terms of processing, monoubiquitination of Lys-117 gives a specific tag for epigenetic transcriptional activation and is also prerequisite for histone H3 'Lys-4' and 'Lys-79' methylation. GlcNAcylation at Ser-109 promotes monoubiquitination of Lys-117. It fluctuates in response to extracellular glucose, and associates with transcribed genes.

It is found in the nucleus. The protein localises to the chromosome. In terms of biological role, core component of nucleosome. Nucleosomes wrap and compact DNA into chromatin, limiting DNA accessibility to the cellular machineries which require DNA as a template. Histones thereby play a central role in transcription regulation, DNA repair, DNA replication and chromosomal stability. DNA accessibility is regulated via a complex set of post-translational modifications of histones, also called histone code, and nucleosome remodeling. The polypeptide is Histone H2B 1 (his-11) (Caenorhabditis elegans).